Reading from the N-terminus, the 126-residue chain is Profilin (126 aa).

This sequence belongs to the profilin family. Occurs in many kinds of cells as a complex with monomeric actin in a 1:1 ratio.

Its subcellular location is the cytoplasm. It localises to the cytoskeleton. Its function is as follows. Binds to actin and affects the structure of the cytoskeleton. At high concentrations, profilin prevents the polymerization of actin, whereas it enhances it at low concentrations. By binding to PIP2, it inhibits the formation of IP3 and DG. The sequence is that of Profilin from Branchiostoma belcheri (Amphioxus).